Consider the following 229-residue polypeptide: 7-cyano-7-deazaguanine synthase (229 aa).

ATP is bound at residue 15–25; the sequence is LSGGLDSATVV. The Zn(2+) site is built by cysteine 194, cysteine 204, cysteine 207, and cysteine 210.

Belongs to the QueC family. Requires Zn(2+) as cofactor.

It catalyses the reaction 7-carboxy-7-deazaguanine + NH4(+) + ATP = 7-cyano-7-deazaguanine + ADP + phosphate + H2O + H(+). The protein operates within purine metabolism; 7-cyano-7-deazaguanine biosynthesis. Catalyzes the ATP-dependent conversion of 7-carboxy-7-deazaguanine (CDG) to 7-cyano-7-deazaguanine (preQ(0)). This is 7-cyano-7-deazaguanine synthase from Pseudomonas syringae pv. syringae (strain B728a).